A 234-amino-acid chain; its full sequence is tRNA (guanine-N(1)-)-methyltransferase (234 aa).

Residues Gly115 and 135–140 each bind S-adenosyl-L-methionine; that span reads VGDYIL.

This sequence belongs to the RNA methyltransferase TrmD family. In terms of assembly, homodimer.

It localises to the cytoplasm. It carries out the reaction guanosine(37) in tRNA + S-adenosyl-L-methionine = N(1)-methylguanosine(37) in tRNA + S-adenosyl-L-homocysteine + H(+). Its function is as follows. Specifically methylates guanosine-37 in various tRNAs. The sequence is that of tRNA (guanine-N(1)-)-methyltransferase from Rickettsia rickettsii (strain Iowa).